An 86-amino-acid chain; its full sequence is Large ribosomal subunit protein bL27 (86 aa).

Belongs to the bacterial ribosomal protein bL27 family.

The protein is Large ribosomal subunit protein bL27 of Xanthomonas axonopodis pv. citri (strain 306).